The following is a 1566-amino-acid chain: Arginine-glutamic acid dipeptide repeats protein (1566 aa).

Basic and acidic residues predominate over residues 1 to 36 (MTADKDKDKDKEKDRDRDRDREREKRDKARESENSR). The tract at residues 1-90 (MTADKDKDKD…KKKSRYERTD (90 aa)) is disordered. A phosphoserine mark is found at Ser53 and Ser56. Basic residues predominate over residues 74–85 (KNKKKPPKKKSR). The region spanning 103–283 (VVYRPGDCVY…PETRRLNSTQ (181 aa)) is the BAH domain. Position 120 is a phosphothreonine (Thr120). A phosphoserine mark is found at Ser142 and Ser304. Positions 284-387 (GEIRVGPSHQ…KALQRLVKKP (104 aa)) constitute an ELM2 domain. The region spanning 391–443 (LIEKCWTEDEVKRFVKGLRQYGKNFFRIRKELLPNKETGELITFYYYWKKTPE) is the SANT domain. Residues 464-495 (TRTASTPVNTPSRPPSSEFLDLSSASEDDFDS) are disordered. Polar residues predominate over residues 465–474 (RTASTPVNTP). A compositionally biased stretch (low complexity) spans 479–488 (SSEFLDLSSA). The GATA-type zinc-finger motif lies at 507-532 (CRHCFTTTSKDWHHGGRENILLCTDC). A disordered region spans residues 542-1133 (LPPIEKPVDP…PSHASQSARF (592 aa)). Lys560 is covalently cross-linked (Glycyl lysine isopeptide (Lys-Gly) (interchain with G-Cter in SUMO2)). Ser594, Ser600, and Ser613 each carry phosphoserine. The segment covering 609 to 623 (SGRNSPSAASTSSND) has biased composition (low complexity). Over residues 624 to 640 (SKAETVKKSAKKVKEEA) the composition is skewed to basic and acidic residues. Lys637 is covalently cross-linked (Glycyl lysine isopeptide (Lys-Gly) (interchain with G-Cter in SUMO2)). Phosphoserine is present on residues Ser642, Ser656, Ser675, and Ser679. Basic and acidic residues predominate over residues 652–673 (EKVASDTEEADRTSSKKTKTQE). Positions 688 to 708 (SDSRSVNDEGSSDPKDIDQDN) are enriched in basic and acidic residues. Residues 709–720 (RSTSPSIPSPQD) are compositionally biased toward polar residues. Over residues 726 to 751 (DSSAQQQMLQAQPPALQAPTGVTPAP) the composition is skewed to low complexity. The segment covering 752–767 (SSAPPGTPQLPTPGPT) has biased composition (pro residues). Over residues 778 to 796 (SPTASQAPNQPQAPTAPVP) the composition is skewed to low complexity. Pro residues predominate over residues 809–827 (QRPPSPHPPPHPSPHPPLQ). The segment covering 829 to 840 (LTGSAGQPSAPS) has biased composition (polar residues). 2 stretches are compositionally biased toward low complexity: residues 843 to 865 (QPPL…LLQH) and 897 to 913 (SLQL…QQPP). Residues 914–940 (REQPLPPAPLAMPHIKPPPTTPIPQLP) show a composition bias toward pro residues. A compositionally biased stretch (low complexity) spans 970–980 (KPLSSLSTHHP). The segment covering 1030 to 1052 (PQPPFAQHPFVPGGPPPITPPTC) has biased composition (pro residues). Low complexity predominate over residues 1053–1085 (PSTSTPPAGPGTSAQPPCSGAAASGGSIAGGSS). 3 positions are modified to phosphoserine: Ser1106, Ser1113, and Ser1115. Pro residues predominate over residues 1106 to 1117 (SPPPPPRSPSPE). At Thr1119 the chain carries Phosphothreonine. The stretch at 1156–1211 (GSKLAKKREEAIEKAKREAEQKAREEREREKEKEKEREREREREREAERAAKASSS) forms a coiled coil. Lys1158 bears the N6-acetyllysine mark. Residues 1162–1206 (KREEAIEKAKREAEQKAREEREREKEKEKEREREREREREAERAA) are compositionally biased toward basic and acidic residues. The interval 1162–1246 (KREEAIEKAK…TTIAAVPPYI (85 aa)) is disordered. The residue at position 1259 (Tyr1259) is a Phosphotyrosine. A Phosphoserine modification is found at Ser1266.

Interacts with HDAC1. Interacts with ATN1. Interaction with ATN1 is improved when the poly-Gln region of ATN1 is extended. Interacts with FAT1. In terms of tissue distribution, widely expressed. Expressed in tumor cell lines.

Its subcellular location is the nucleus. Plays a role as a transcriptional repressor during development. May play a role in the control of cell survival. Overexpression of RERE recruits BAX to the nucleus particularly to POD and triggers caspase-3 activation, leading to cell death. This is Arginine-glutamic acid dipeptide repeats protein (RERE) from Homo sapiens (Human).